Consider the following 242-residue polypeptide: 1-(5-phosphoribosyl)-5-[(5-phosphoribosylamino)methylideneamino] imidazole-4-carboxamide isomerase (242 aa).

The Proton acceptor role is filled by aspartate 10. Catalysis depends on aspartate 131, which acts as the Proton donor.

This sequence belongs to the HisA/HisF family.

Its subcellular location is the cytoplasm. The enzyme catalyses 1-(5-phospho-beta-D-ribosyl)-5-[(5-phospho-beta-D-ribosylamino)methylideneamino]imidazole-4-carboxamide = 5-[(5-phospho-1-deoxy-D-ribulos-1-ylimino)methylamino]-1-(5-phospho-beta-D-ribosyl)imidazole-4-carboxamide. It participates in amino-acid biosynthesis; L-histidine biosynthesis; L-histidine from 5-phospho-alpha-D-ribose 1-diphosphate: step 4/9. This is 1-(5-phosphoribosyl)-5-[(5-phosphoribosylamino)methylideneamino] imidazole-4-carboxamide isomerase from Bifidobacterium animalis subsp. lactis (strain AD011).